A 61-amino-acid chain; its full sequence is Potassium channel toxin alpha-KTx 6.7 (61 aa).

The N-terminal stretch at methionine 1–glycine 23 is a signal peptide. 4 cysteine pairs are disulfide-bonded: cysteine 29–cysteine 50, cysteine 35–cysteine 55, cysteine 39–cysteine 57, and cysteine 45–cysteine 60. Cysteine amide is present on cysteine 60.

The protein belongs to the short scorpion toxin superfamily. Potassium channel inhibitor family. Alpha-KTx 06 subfamily. In terms of tissue distribution, expressed by the venom gland.

The protein localises to the secreted. Its function is as follows. Blocker of voltage-gated potassium channels. The sequence is that of Potassium channel toxin alpha-KTx 6.7 from Opistophthalmus carinatus (African yellow leg scorpion).